The primary structure comprises 201 residues: Ribonuclease HII (201 aa).

The RNase H type-2 domain occupies 11 to 201 (LRECGCDEAG…VVDADRPTTE (191 aa)). A divalent metal cation contacts are provided by D17, E18, and D109.

This sequence belongs to the RNase HII family. Mn(2+) serves as cofactor. The cofactor is Mg(2+).

The protein localises to the cytoplasm. The catalysed reaction is Endonucleolytic cleavage to 5'-phosphomonoester.. In terms of biological role, endonuclease that specifically degrades the RNA of RNA-DNA hybrids. This chain is Ribonuclease HII (rnhB), found in Porphyromonas gingivalis (strain ATCC BAA-308 / W83).